The sequence spans 358 residues: U5 small nuclear ribonucleoprotein 40 kDa protein (358 aa).

A Glycyl lysine isopeptide (Lys-Gly) (interchain with G-Cter in SUMO2) cross-link involves residue K18. Asymmetric dimethylarginine is present on R21. WD repeat units follow at residues 65–104 (GHEG…DNYA), 108–147 (GHSG…RVKR), 150–190 (GHTS…AVQT), 192–231 (QNTY…LTYT), 234–273 (GHAD…PKER), 284–323 (NFEK…VLYK), and 326–358 (GHAG…GEIQ). Residue K271 forms a Glycyl lysine isopeptide (Lys-Gly) (interchain with G-Cter in SUMO2) linkage.

Component of the pre-catalytic and catalytic spliceosome complexes. Component of the postcatalytic spliceosome P complex. Part of the U5 snRNP complex. Interacts with PRPF8. Component of the U4/U6-U5 tri-snRNP complex composed of the U4, U6 and U5 snRNAs and at least PRPF3, PRPF4, PRPF6, PRPF8, PRPF31, SNRNP200, TXNL4A, WDR57, SNRNP40, DDX23, CD2BP2, PPIH, SNU13, EFTUD2, SART1 and USP39. Component of the minor spliceosome, which splices U12-type introns.

It localises to the nucleus. Required for pre-mRNA splicing as component of the activated spliceosome. Component of the U5 small nuclear ribonucleoprotein (snRNP) complex and the U4/U6-U5 tri-snRNP complex, building blocks of the spliceosome. As a component of the minor spliceosome, involved in the splicing of U12-type introns in pre-mRNAs. In Mus musculus (Mouse), this protein is U5 small nuclear ribonucleoprotein 40 kDa protein (Snrnp40).